Consider the following 540-residue polypeptide: Glucose-6-phosphate isomerase (540 aa).

The Proton donor role is filled by glutamate 350. Residues histidine 381 and lysine 503 contribute to the active site.

The protein belongs to the GPI family.

It is found in the cytoplasm. The enzyme catalyses alpha-D-glucose 6-phosphate = beta-D-fructose 6-phosphate. It participates in carbohydrate biosynthesis; gluconeogenesis. Its pathway is carbohydrate degradation; glycolysis; D-glyceraldehyde 3-phosphate and glycerone phosphate from D-glucose: step 2/4. Its function is as follows. Catalyzes the reversible isomerization of glucose-6-phosphate to fructose-6-phosphate. This is Glucose-6-phosphate isomerase from Burkholderia orbicola (strain MC0-3).